The following is a 191-amino-acid chain: Mating-type-like protein ALPHA1 (191 aa).

The segment at residues 118-174 is a DNA-binding region (alpha box); the sequence is SKKRPMNAFMAFRTYYAQLGTGLKQNTLSVILSEAWNAPETDQNIWDIFAQQFNFAS.

The protein belongs to the MATALPHA1 family.

It localises to the nucleus. Mating type proteins are sequence specific DNA-binding proteins that act as master switches in yeast differentiation by controlling gene expression in a cell type-specific fashion. Transcriptional activator that induces the transcription of alpha-specific genes. This chain is Mating-type-like protein ALPHA1 (MTL1ALPHA1), found in Candida glabrata (strain ATCC 2001 / BCRC 20586 / JCM 3761 / NBRC 0622 / NRRL Y-65 / CBS 138) (Yeast).